The following is a 142-amino-acid chain: MAVKIRLKRMGKIRDPRYRVVVVDSRKKRDGRVIEEVGVYQPTENPSYINLVSDRVQYWLGVGAQPSEAVLALMKITGDWQKFKGLPGAEGTLRQPEGKTPFVAPDNGSVIIPEAITPKAEKAEEAPAEDAAPAEDDAEKAE.

Residues G88–E142 are disordered. A compositionally biased stretch (acidic residues) spans A126–E142.

This sequence belongs to the bacterial ribosomal protein bS16 family.

In Kocuria rhizophila (strain ATCC 9341 / DSM 348 / NBRC 103217 / DC2201), this protein is Small ribosomal subunit protein bS16.